Reading from the N-terminus, the 292-residue chain is MHPARPALWAAALTALTLLRGPPVARAGAGAVGAGPVVRCEPCDARALSQCAPPPTAPACTELVREPGCGCCLTCALREGDACGVYTERCGTGLRCQPRPAEQYPLRALLNGRGFCANASAAGSLSTYLPSQPAPGNISESEEEHNAGSVESQVVPSTHRVTDSKFHPLHAKMDVIKKGHARDSQRYKVDYESQSTDTQNFSSESKRETEYGPCRREMEDTLNHLKFLNVLSPRGVHIPNCDKKGFYKKKQCRPSKGRKRGFCWCVDKYGQPLPGYDTKGKDDVHCLSVQSQ.

Residues 1-27 (MHPARPALWAAALTALTLLRGPPVARA) form the signal peptide. Positions 36 to 119 (PVVRCEPCDA…LNGRGFCANA (84 aa)) constitute an IGFBP N-terminal domain. Cystine bridges form between Cys40–Cys69, Cys43–Cys71, Cys51–Cys72, Cys60–Cys75, Cys83–Cys96, and Cys90–Cys116. N-linked (GlcNAc...) asparagine glycans are attached at residues Asn118 and Asn137. Disordered stretches follow at residues 128–152 (YLPS…SVES) and 178–212 (KGHA…TEYG). Ser149 carries the post-translational modification Phosphoserine. The span at 178-191 (KGHARDSQRYKVDY) shows a compositional bias: basic and acidic residues. The segment covering 192–203 (ESQSTDTQNFSS) has biased composition (polar residues). Asn200 is a glycosylation site (N-linked (GlcNAc...) asparagine). A Phosphoserine modification is found at Ser202. In terms of domain architecture, Thyroglobulin type-1 spans 211 to 286 (YGPCRREMED…DTKGKDDVHC (76 aa)). Intrachain disulfides connect Cys214-Cys241, Cys252-Cys263, and Cys265-Cys286.

Interacts with XLKD1. Binds IGF2 more than IGF1. Forms a ternary complex of about 140 to 150 kDa with IGF1 or IGF2 and a 85 kDa glycoprotein (ALS). Interacts with TMEM219. Phosphorylated by FAM20C in the extracellular medium.

Its subcellular location is the secreted. Its function is as follows. IGF-binding proteins prolong the half-life of the IGFs and have been shown to either inhibit or stimulate the growth promoting effects of the IGFs on cell culture. They alter the interaction of IGFs with their cell surface receptors. Also exhibits IGF-independent antiproliferative and apoptotic effects mediated by its receptor TMEM219/IGFBP-3R. Promotes testicular germ cell apoptosis. This is Insulin-like growth factor-binding protein 3 (Igfbp3) from Mus musculus (Mouse).